The primary structure comprises 500 residues: NAD(P)H-quinone oxidoreductase chain 4, chloroplastic (500 aa).

The next 14 membrane-spanning stretches (helical) occupy residues 4 to 24 (FPWL…MLFL), 35 to 55 (YTIC…CYNF), 87 to 107 (IGTI…AFPV), 113 to 130 (LFHF…GSFS), 134 to 154 (LLLF…LLSM), 167 to 187 (FILY…GISL), 211 to 231 (ILFY…IPLH), 242 to 262 (HYST…YGLV), 272 to 292 (AHSM…IYAA), 305 to 325 (IAYS…SITD), 330 to 350 (GAIL…FLAG), 386 to 406 (LALP…GIIT), 416 to 436 (ILII…LLSM), and 462 to 482 (LFLS…PDFV).

The protein belongs to the complex I subunit 4 family.

The protein resides in the plastid. The protein localises to the chloroplast thylakoid membrane. The enzyme catalyses a plastoquinone + NADH + (n+1) H(+)(in) = a plastoquinol + NAD(+) + n H(+)(out). The catalysed reaction is a plastoquinone + NADPH + (n+1) H(+)(in) = a plastoquinol + NADP(+) + n H(+)(out). This is NAD(P)H-quinone oxidoreductase chain 4, chloroplastic from Olimarabidopsis pumila (Dwarf rocket).